A 468-amino-acid polypeptide reads, in one-letter code: Membrane-associated tyrosine- and threonine-specific cdc2-inhibitory kinase wee-1.1 (468 aa).

The span at 25-42 shows a compositional bias: basic and acidic residues; it reads SKDEPNKLNTSRKLEVTT. Positions 25–63 are disordered; sequence SKDEPNKLNTSRKLEVTTKKNQSNNKKRPPPINKARKSL. Basic residues predominate over residues 49 to 61; the sequence is NKKRPPPINKARK. Residues 106-357 form the Protein kinase domain; the sequence is FNFDKNLGKG…SELMKNHVVK (252 aa). Residues 112 to 120 and Lys135 each bind ATP; that span reads LGKGSFGEV. Asp224 serves as the catalytic Proton acceptor. Mg(2+) contacts are provided by Asn229 and Asp242. The disordered stretch occupies residues 425–453; sequence EDEYEVFSPPRTPVKKSRYQQTMPEVSPP.

The protein belongs to the protein kinase superfamily. Ser/Thr protein kinase family. WEE1 subfamily. In terms of tissue distribution, in the 12-13-cell embryo, expressed in the E blastomere. In the 16-cell embryo, expressed in the eight AB cells.

It is found in the nucleus. The enzyme catalyses L-seryl-[protein] + ATP = O-phospho-L-seryl-[protein] + ADP + H(+). It catalyses the reaction L-threonyl-[protein] + ATP = O-phospho-L-threonyl-[protein] + ADP + H(+). In terms of biological role, acts as a negative regulator of entry into mitosis (G2 to M transition) by phosphorylation of the CDK1 kinase. The sequence is that of Membrane-associated tyrosine- and threonine-specific cdc2-inhibitory kinase wee-1.1 (wee-1.1) from Caenorhabditis elegans.